The following is a 281-amino-acid chain: Pantothenate synthetase (281 aa).

Position 30-37 (30-37 (MGYLHEGH)) interacts with ATP. The Proton donor role is filled by His37. Gln61 lines the (R)-pantoate pocket. Beta-alanine is bound at residue Gln61. 147 to 150 (GEKD) provides a ligand contact to ATP. Position 153 (Gln153) interacts with (R)-pantoate. Residues Ile176 and 184–187 (KSSR) each bind ATP.

The protein belongs to the pantothenate synthetase family. As to quaternary structure, homodimer.

The protein localises to the cytoplasm. It carries out the reaction (R)-pantoate + beta-alanine + ATP = (R)-pantothenate + AMP + diphosphate + H(+). It functions in the pathway cofactor biosynthesis; (R)-pantothenate biosynthesis; (R)-pantothenate from (R)-pantoate and beta-alanine: step 1/1. Catalyzes the condensation of pantoate with beta-alanine in an ATP-dependent reaction via a pantoyl-adenylate intermediate. This Clostridium botulinum (strain Okra / Type B1) protein is Pantothenate synthetase.